The sequence spans 610 residues: Ecto-NOX disulfide-thiol exchanger 2 (610 aa).

An RRM domain is found at 128-207 (KTVFVGGLPE…GRLHVDFAQA (80 aa)). Coiled-coil stretches lie at residues 293-328 (IQSA…LSGI) and 381-505 (RREE…KESC).

This sequence belongs to the ENOX family. Cu cation is required as a cofactor. Glycosylated. In terms of tissue distribution, found in the sera of cancer patients with a wide variety of cancers including breast, prostate, lung and ovarian cancers, leukemias, and lymphomas. Not found in the serum of healthy volunteers or patients with disorders other than cancer. Probably shed into serum by cancer cells. Found on the cell borders of renal, kidney and ovarian carcinomas but not on the borders of surrounding non-cancerous stromal cells.

The protein resides in the cell membrane. The protein localises to the secreted. It is found in the extracellular space. Inhibited by the antitumor sulfonylurea LY181984, the vabilloid capsaicin, and retinoids. In terms of biological role, may be involved in cell growth. Probably acts as a terminal oxidase of plasma electron transport from cytosolic NAD(P)H via hydroquinones to acceptors at the cell surface. Hydroquinone oxidase activity alternates with a protein disulfide-thiol interchange/oxidoreductase activity which may control physical membrane displacements associated with vesicle budding or cell enlargement. The activities oscillate with a period length of 22 minutes and play a role in control of the ultradian cellular biological clock. This chain is Ecto-NOX disulfide-thiol exchanger 2 (ENOX2), found in Homo sapiens (Human).